The sequence spans 206 residues: Small ribosomal subunit protein uS4 (206 aa).

Positions 23-47 are disordered; sequence AKSPLNRREYGPGQHGQRRKGKLSD. Residues 94 to 157 form the S4 RNA-binding domain; the sequence is RRLDAVIYRA…RQLAIVLESV (64 aa).

This sequence belongs to the universal ribosomal protein uS4 family. As to quaternary structure, part of the 30S ribosomal subunit. Contacts protein S5. The interaction surface between S4 and S5 is involved in control of translational fidelity.

In terms of biological role, one of the primary rRNA binding proteins, it binds directly to 16S rRNA where it nucleates assembly of the body of the 30S subunit. Its function is as follows. With S5 and S12 plays an important role in translational accuracy. The sequence is that of Small ribosomal subunit protein uS4 from Paracoccus denitrificans (strain Pd 1222).